The sequence spans 725 residues: Glyoxysomal fatty acid beta-oxidation multifunctional protein MFP-a (725 aa).

Glu119 functions as the Nucleophile in the catalytic mechanism. Catalysis depends on Glu139, which acts as the Proton acceptor. The Microbody targeting signal motif lies at 723–725 (SRL).

This sequence in the N-terminal section; belongs to the enoyl-CoA hydratase/isomerase family. The protein in the central section; belongs to the 3-hydroxyacyl-CoA dehydrogenase family.

Its subcellular location is the glyoxysome. The catalysed reaction is a (3S)-3-hydroxyacyl-CoA = a (2E)-enoyl-CoA + H2O. It carries out the reaction a 4-saturated-(3S)-3-hydroxyacyl-CoA = a (3E)-enoyl-CoA + H2O. It catalyses the reaction a (3Z)-enoyl-CoA = a 4-saturated (2E)-enoyl-CoA. The enzyme catalyses a (3E)-enoyl-CoA = a 4-saturated (2E)-enoyl-CoA. The catalysed reaction is (3S)-3-hydroxybutanoyl-CoA = (3R)-3-hydroxybutanoyl-CoA. It carries out the reaction a (3S)-3-hydroxyacyl-CoA + NAD(+) = a 3-oxoacyl-CoA + NADH + H(+). It participates in lipid metabolism; fatty acid beta-oxidation. The protein is Glyoxysomal fatty acid beta-oxidation multifunctional protein MFP-a of Brassica napus (Rape).